Reading from the N-terminus, the 159-residue chain is ATP synthase subunit b (159 aa).

A helical transmembrane segment spans residues 8 to 28 (ILATIINFIILILILKHFFWD).

It belongs to the ATPase B chain family. F-type ATPases have 2 components, F(1) - the catalytic core - and F(0) - the membrane proton channel. F(1) has five subunits: alpha(3), beta(3), gamma(1), delta(1), epsilon(1). F(0) has three main subunits: a(1), b(2) and c(10-14). The alpha and beta chains form an alternating ring which encloses part of the gamma chain. F(1) is attached to F(0) by a central stalk formed by the gamma and epsilon chains, while a peripheral stalk is formed by the delta and b chains.

Its subcellular location is the cell membrane. F(1)F(0) ATP synthase produces ATP from ADP in the presence of a proton or sodium gradient. F-type ATPases consist of two structural domains, F(1) containing the extramembraneous catalytic core and F(0) containing the membrane proton channel, linked together by a central stalk and a peripheral stalk. During catalysis, ATP synthesis in the catalytic domain of F(1) is coupled via a rotary mechanism of the central stalk subunits to proton translocation. In terms of biological role, component of the F(0) channel, it forms part of the peripheral stalk, linking F(1) to F(0). The chain is ATP synthase subunit b from Clostridium perfringens (strain ATCC 13124 / DSM 756 / JCM 1290 / NCIMB 6125 / NCTC 8237 / Type A).